The primary structure comprises 576 residues: (E,E)-alpha-farnesene synthase (576 aa).

Residues Arg-289, Asp-326, Asp-330, Arg-468, and Asn-471 each contribute to the (2E,6E)-farnesyl diphosphate site. Asp-326 and Asp-330 together coordinate Mg(2+). The short motif at 326 to 330 (DDVYD) is the DDXXD motif element. Mg(2+) is bound by residues Asn-471, Thr-475, and Glu-479. Residues Asp-484 and Ser-487 each contribute to the K(+) site.

This sequence belongs to the terpene synthase family. Tpsb subfamily. As to quaternary structure, monomer. Mg(2+) serves as cofactor. Mn(2+) is required as a cofactor. It depends on K(+) as a cofactor.

Its subcellular location is the cytoplasm. The enzyme catalyses (2E,6E)-farnesyl diphosphate = (3E,6E)-alpha-farnesene + diphosphate. In terms of biological role, sesquiterpene synthase catalyzing the production of (E,E)-alpha-farnesene, the predominant terpene produced during storage of fruits. Produces all six isomers (E,E)-alpha-farnesene, (Z,E)-alpha-farnesene, (E,Z)-alpha-farnesene, (Z,Z)-alpha-farnesene, (E)-beta-farnesene and (Z)-beta-farnesene from a mix of isomeric forms of the farnesyl diphosphate precursor. Able to convert geranyl diphosphate to the monoterpenes (E)-beta-ocimene, linalool and beta-myrcene. Also has a prenyltransferase activity producing alpha-farnesene directly from geranyl diphosphate and isoprenyl diphosphate. In Malus domestica (Apple), this protein is (E,E)-alpha-farnesene synthase (AFS1).